The chain runs to 74 residues: MKSFYHYLMKYRHPKPQDAISQFANQAYEDHGFPKTSSDYHELSSYLELSADYLETMATFDEAWEKYETEVHHA.

Belongs to the UPF0346 family.

This Bacillus velezensis (strain DSM 23117 / BGSC 10A6 / LMG 26770 / FZB42) (Bacillus amyloliquefaciens subsp. plantarum) protein is UPF0346 protein RBAM_019500.